The following is an 88-amino-acid chain: uncharacterized protein (88 aa).

Helical transmembrane passes span 27 to 46 (LFIFRVLNVVSIAILFETPH) and 61 to 83 (SMCLYNCYCLYNVVTFSLNLILI).

Its subcellular location is the membrane. This is an uncharacterized protein from Saccharomyces cerevisiae (strain ATCC 204508 / S288c) (Baker's yeast).